The following is a 1050-amino-acid chain: Sentrin-specific protease 7 (1050 aa).

3 disordered regions span residues 1 to 28 (MDKR…SSDL), 183 to 288 (PPVT…DVKY), and 304 to 365 (RRLR…KSDF). Residues S11, S12, S13, and S25 each carry the phosphoserine modification. Over residues 196–211 (LQSEQLSSSSDGSLES) the composition is skewed to low complexity. Residues 259-271 (ISDTQPEDLNSGS) are compositionally biased toward polar residues. The segment covering 273-288 (GCDHLEQESRNKDVKY) has biased composition (basic and acidic residues). Residues 310–320 (LPDSQYCTSLD) show a composition bias toward polar residues. 2 stretches are compositionally biased toward basic and acidic residues: residues 321 to 331 (KSTEQTKKQED) and 338 to 365 (EFEK…KSDF). A phosphoserine mark is found at S373, S433, S443, and S444. The disordered stretch occupies residues 443–476 (SSDEEGPVEHKSSEILKLQSKQDRETTNENESTS). Positions 449-469 (PVEHKSSEILKLQSKQDRETT) are enriched in basic and acidic residues. The tract at residues 760–1050 (LGVTNEDLEC…HLQQQKGSSS (291 aa)) is protease. Residues H860 and D939 contribute to the active site. Catalysis depends on C992, which acts as the Nucleophile.

This sequence belongs to the peptidase C48 family.

It localises to the cytoplasm. Its function is as follows. Protease that acts as a positive regulator of the cGAS-STING pathway by catalyzing desumoylation of CGAS. Desumoylation of CGAS promotes DNA-binding activity of CGAS, subsequent oligomerization and activation. Deconjugates SUMO2 and SUMO3 from targeted proteins, but not SUMO1. Catalyzes the deconjugation of poly-SUMO2 and poly-SUMO3 chains. Has very low efficiency in processing full-length SUMO proteins to their mature forms. This is Sentrin-specific protease 7 from Homo sapiens (Human).